We begin with the raw amino-acid sequence, 600 residues long: DDB1- and CUL4-associated factor 15 (600 aa).

The interval 1–29 is disordered; it reads MAPSSKSERNSGAGSAGGGPGGTGGKRAV. Residues 14–27 are compositionally biased toward gly residues; sequence GSAGGGPGGTGGKR. Ser50 is subject to Phosphoserine. Residues Cys193, Cys196, Cys211, and His214 each coordinate Zn(2+). Position 314 is a phosphoserine (Ser314). The span at 334–343 shows a compositional bias: basic and acidic residues; it reads AKGSPLEETR. The disordered stretch occupies residues 334-384; that stretch reads AKGSPLEETRLPSSLGPSSSRCRPSLEPQAPSGEVVPRDSPPAAETTAPEP. 2 stretches are compositionally biased toward low complexity: residues 344 to 359 and 374 to 384; these read LPSS…RPSL and PPAAETTAPEP.

As to quaternary structure, component of the DCX(DCAF15) complex, also named CLR4(DCAF15) complex, composed of DCAF15, DDB1, cullin-4 (CUL4A or CUL4B), DDA1 and RBX1.

It functions in the pathway protein modification; protein ubiquitination. In terms of biological role, substrate-recognition component of the DCX(DCAF15) complex, a cullin-4-RING E3 ubiquitin-protein ligase complex that mediates ubiquitination and degradation of target proteins. The DCX(DCAF15) complex acts as a regulator of the natural killer (NK) cells effector functions, possibly by mediating ubiquitination and degradation of cohesin subunits SMC1A and SMC3. May play a role in the activation of antigen-presenting cells (APC) and their interaction with NK cells. The chain is DDB1- and CUL4-associated factor 15 from Mus musculus (Mouse).